The sequence spans 1255 residues: Cilia- and flagella-associated protein 337 B (1255 aa).

In terms of domain architecture, EF-hand spans 87–122 (KLVRCLTNLFEEIDLNGNGILEWDEFTNYVIEKATV). Ca(2+)-binding residues include Asp-100, Asn-102, Asn-104, and Glu-111. WD repeat units follow at residues 228-269 (DLKT…WVLA), 282-322 (EFKN…KELE), 326-365 (AHTEVIMDMITMPKLQFLASGALDGLLILWDTINNKKKRV), 368-407 (EHTRGITSLSFNEALILLFSAGFDHEVCVWNPYIDNLIYK), 410-449 (GHSSPLLGVKVIEGTSQVITLDSDGNVRVTDIKKFSNVQC), 496-536 (VDDY…KIFS), 538-577 (VTQGEITCFTLDSLKKRMLIGDSMGQIGIYNTYNGAMIKA), 580-624 (KHSA…RTLE), 625-664 (LKDVMITSLGFDPITKMIIVATNTGITSFYESDTGKQNGS), 669-708 (TQYEEITSLNLIKNLPYIITTTTNGKINFIALPPLLFKFQ), 769-808 (QQNLSISNCIYCDQTKCLFLSDDKGFIKCFDISQILTILE), and 844-883 (AHYEMIKSLEYIQEENLLITTAYDKKVKLWDSKTGNLIDQ). 2 disordered regions span residues 941–988 (IKSL…NFNP) and 1140–1160 (QQQVQNQQTEPSSNRSHQQPG). Low complexity predominate over residues 953–969 (TQESSTQEQEAAQQPQQ). The segment covering 1148–1160 (TEPSSNRSHQQPG) has biased composition (polar residues).

The protein belongs to the CFAP337 family. Associates with components of the nexin-dynein regulatory complex (N-DRC) and the CFAP184:CFAP263 complex.

It is found in the cell projection. Its subcellular location is the cilium. Its function is as follows. Associates with components of the nexin-dynein regulatory complex (N-DRC), a key regulator of ciliary/flagellar motility, and might act as an inner dynein arm (IDA) hub or linkage. The polypeptide is Cilia- and flagella-associated protein 337 B (Tetrahymena thermophila (strain SB210)).